The sequence spans 31 residues: Photosystem II reaction center protein T (31 aa).

The chain crosses the membrane as a helical span at residues 3–23; that stretch reads SFAYVLILTFAIATLFFAIAF.

It belongs to the PsbT family. As to quaternary structure, PSII is composed of 1 copy each of membrane proteins PsbA, PsbB, PsbC, PsbD, PsbE, PsbF, PsbH, PsbI, PsbJ, PsbK, PsbL, PsbM, PsbT, PsbX, PsbY, PsbZ, Psb30/Ycf12, peripheral proteins PsbO, CyanoQ (PsbQ), PsbU, PsbV and a large number of cofactors. It forms dimeric complexes.

The protein resides in the cellular thylakoid membrane. Functionally, found at the monomer-monomer interface of the photosystem II (PS II) dimer, plays a role in assembly and dimerization of PSII. PSII is a light-driven water plastoquinone oxidoreductase, using light energy to abstract electrons from H(2)O, generating a proton gradient subsequently used for ATP formation. This is Photosystem II reaction center protein T from Synechococcus sp. (strain CC9902).